We begin with the raw amino-acid sequence, 267 residues long: Probable ribosomal RNA small subunit methyltransferase A (267 aa).

S-adenosyl-L-methionine-binding residues include Leu12, Gly37, Glu58, Asp83, and Asn100.

Belongs to the class I-like SAM-binding methyltransferase superfamily. rRNA adenine N(6)-methyltransferase family. RsmA subfamily.

It localises to the cytoplasm. Specifically dimethylates two adjacent adenosines in the loop of a conserved hairpin near the 3'-end of 16S rRNA in the 30S particle. May play a critical role in biogenesis of 30S subunits. In Methanococcus maripaludis (strain DSM 14266 / JCM 13030 / NBRC 101832 / S2 / LL), this protein is Probable ribosomal RNA small subunit methyltransferase A.